Here is a 640-residue protein sequence, read N- to C-terminus: 1-deoxy-D-xylulose-5-phosphate synthase (640 aa).

Thiamine diphosphate is bound by residues His-75 and 117–119; that span reads GHA. Asp-146 contributes to the Mg(2+) binding site. Thiamine diphosphate is bound by residues 147–148, Asn-175, and Glu-370; that span reads AA. Asn-175 is a Mg(2+) binding site.

Belongs to the transketolase family. DXPS subfamily. Homodimer. The cofactor is Mg(2+). Thiamine diphosphate serves as cofactor.

It catalyses the reaction D-glyceraldehyde 3-phosphate + pyruvate + H(+) = 1-deoxy-D-xylulose 5-phosphate + CO2. Its pathway is metabolic intermediate biosynthesis; 1-deoxy-D-xylulose 5-phosphate biosynthesis; 1-deoxy-D-xylulose 5-phosphate from D-glyceraldehyde 3-phosphate and pyruvate: step 1/1. Functionally, catalyzes the acyloin condensation reaction between C atoms 2 and 3 of pyruvate and glyceraldehyde 3-phosphate to yield 1-deoxy-D-xylulose-5-phosphate (DXP). This chain is 1-deoxy-D-xylulose-5-phosphate synthase, found in Chlamydia trachomatis serovar L2 (strain ATCC VR-902B / DSM 19102 / 434/Bu).